The sequence spans 996 residues: MAAEWASRFWLWAALLIPVAAVYEDQVGKFDWRQQYVGKLKFASLEFSPGSKKLVVATEKNVIAALNSRTGEILWRHVDKGTAEGAVDAMLLHGQDVITVSNGGRIMRSWETNIGGLNWEITLDTGSFQALGLVGLQESVRYIAVLKKTTLALHHLSSGHLKWVEHLPESDSIHYQMVYSYGSGVVWALGVVPFSHVNIVKFNVEDGEIVQQVRVSTPWLQHLSGACGVVDEAVLVCPDPSSRSLQTLALETEWELRQIPLQSLDLEFGSGFQPRVLPTQPNPVDASRAQFFLHLSPSHYALLQYHYGILSLLKNFPQTALVSFATTGEKTVAAVMACRNEVQKTSNSEDGSMGSFSEKSSSKDSLACFNQTYTINLYLVETGRRLLDTTTTFSLEQSGTRPERLYIQVFLKKDDSVGYRALVQTEDHLLLFLQQLAGKVVLWSREESLAEVVCLEMVDLPLTGAQAELEGEFGKKAAIQDGLLGMFLKRLSSQLILLQAWTSHLWKMFYDARKPRSQIKNEINIDTLARDEFNLQKMMVMVTASGKLFGIESSSGTILWKQYLPSVKPDSSFKLMVQRTTAHFPHPPQCTLLVKDKESGMSSLYVFNPIFGKWSQVAPPVLKRPILQSLLLPVMDQDYAKVLLLIDDEYKVTAFPATRNVLRQLHELAPSIFFYLVDAEQGRLCGYRLRKDLTTELSWELTIPPEVRRIVKVKGKRSSEHVHSQGRVMGDRSVLYKSLNPNLLAVVTESTDAHHERTFIGIFLIDGVTGRIIHSSAQKKAKGPVHIVHSENWVVYQYWNTKARRNEFTVLELYEGTEQYNATAFSSLDRPQLPQVLQQSYIFPSSISAMEATITERGITSRHLLIGLPSGAILSLPKALLDPRRPEIPTEQSREENLIPYSPDVQIHAERFINYNQTVSRMRGIYTAPSGLESTCLVVAYGLDIYQTRVYPSKQFDVLKDDYDYVLISSVLFGLVFATMITKRLAQVKLLNRAWR.

The signal sequence occupies residues M1–V22. The Lumenal portion of the chain corresponds to Y23–Y965. 2 disulfides stabilise this stretch: C227/C237 and C338/C368. N-linked (GlcNAc...) asparagine glycosylation is present at N916. A helical transmembrane segment spans residues V966–A986. At Q987–R996 the chain is on the cytoplasmic side.

It belongs to the EMC1 family. As to quaternary structure, component of the ER membrane protein complex (EMC).

The protein resides in the endoplasmic reticulum membrane. Part of the endoplasmic reticulum membrane protein complex (EMC) that enables the energy-independent insertion into endoplasmic reticulum membranes of newly synthesized membrane proteins. Preferentially accommodates proteins with transmembrane domains that are weakly hydrophobic or contain destabilizing features such as charged and aromatic residues. Involved in the cotranslational insertion of multi-pass membrane proteins in which stop-transfer membrane-anchor sequences become ER membrane spanning helices. It is also required for the post-translational insertion of tail-anchored/TA proteins in endoplasmic reticulum membranes. By mediating the proper cotranslational insertion of N-terminal transmembrane domains in an N-exo topology, with translocated N-terminus in the lumen of the ER, controls the topology of multi-pass membrane proteins like the G protein-coupled receptors. By regulating the insertion of various proteins in membranes, it is indirectly involved in many cellular processes. The polypeptide is ER membrane protein complex subunit 1 (EMC1) (Pongo abelii (Sumatran orangutan)).